Reading from the N-terminus, the 307-residue chain is tRNA dimethylallyltransferase (307 aa).

ATP is bound at residue 7-14 (GPTAGGKT). Residue 9 to 14 (TAGGKT) participates in substrate binding. Residues 32-35 (DSRQ) form an interaction with substrate tRNA region.

It belongs to the IPP transferase family. As to quaternary structure, monomer. Mg(2+) serves as cofactor.

It catalyses the reaction adenosine(37) in tRNA + dimethylallyl diphosphate = N(6)-dimethylallyladenosine(37) in tRNA + diphosphate. Functionally, catalyzes the transfer of a dimethylallyl group onto the adenine at position 37 in tRNAs that read codons beginning with uridine, leading to the formation of N6-(dimethylallyl)adenosine (i(6)A). In Elusimicrobium minutum (strain Pei191), this protein is tRNA dimethylallyltransferase.